Here is a 548-residue protein sequence, read N- to C-terminus: Chaperonin GroEL (548 aa).

ATP is bound by residues 30–33, K51, 87–91, G415, 479–481, and D495; these read TLGP, DGTTT, and NAA. Residues 524–548 are disordered; sequence LPKEDKSSDSSSSPAGGMGGMGGMM. Positions 539 to 548 are enriched in gly residues; it reads GGMGGMGGMM.

It belongs to the chaperonin (HSP60) family. As to quaternary structure, forms a cylinder of 14 subunits composed of two heptameric rings stacked back-to-back. Interacts with the co-chaperonin GroES.

It is found in the cytoplasm. It carries out the reaction ATP + H2O + a folded polypeptide = ADP + phosphate + an unfolded polypeptide.. Functionally, together with its co-chaperonin GroES, plays an essential role in assisting protein folding. The GroEL-GroES system forms a nano-cage that allows encapsulation of the non-native substrate proteins and provides a physical environment optimized to promote and accelerate protein folding. The polypeptide is Chaperonin GroEL (Buchnera aphidicola subsp. Acyrthosiphon pisum (strain Tuc7)).